The chain runs to 89 residues: MSLNAEQKAKVVLEHGSSAHDTGSTEVQVALLTLRINDLQKHFLEHKKDHHSRRGLLRMVSQRRKLLDYLKKRNISKYTDLIQSLGLRK.

It belongs to the universal ribosomal protein uS15 family. In terms of assembly, part of the 30S ribosomal subunit. Forms a bridge to the 50S subunit in the 70S ribosome, contacting the 23S rRNA.

Functionally, one of the primary rRNA binding proteins, it binds directly to 16S rRNA where it helps nucleate assembly of the platform of the 30S subunit by binding and bridging several RNA helices of the 16S rRNA. Forms an intersubunit bridge (bridge B4) with the 23S rRNA of the 50S subunit in the ribosome. The polypeptide is Small ribosomal subunit protein uS15 (Hamiltonella defensa subsp. Acyrthosiphon pisum (strain 5AT)).